The sequence spans 828 residues: G-type lectin S-receptor-like serine/threonine-protein kinase At2g19130 (828 aa).

Residues 1–22 (MVSFLTLTSFFFICFFIHGSSA) form the signal peptide. The Bulb-type lectin domain maps to 23–146 (VDTISGDFTL…GSSLSANVLW (124 aa)). Over 23–439 (VDTISGDFTL…GASGKSNNKG (417 aa)) the chain is Extracellular. Asparagine 85, asparagine 113, asparagine 203, asparagine 234, asparagine 240, and asparagine 255 each carry an N-linked (GlcNAc...) asparagine glycan. The region spanning 286 to 322 (PRQQCQVYRYCGSFGICSDKSEPFCRCPQGFRPMSQK) is the EGF-like domain. 4 cysteine pairs are disulfide-bonded: cysteine 290–cysteine 302, cysteine 296–cysteine 310, cysteine 372–cysteine 394, and cysteine 376–cysteine 382. The PAN domain occupies 341-422 (CSRGDINQFF…EGNIFYLRLA (82 aa)). The helical transmembrane segment at 440–460 (LIFGAVLGSLGVIVLVLLVVI) threads the bilayer. Residues 461–828 (LILRYRRRKR…KKMTNDNSSA (368 aa)) are Cytoplasmic-facing. The region spanning 493-770 (KNFSDKLGGG…QVVQILEGVL (278 aa)) is the Protein kinase domain. ATP-binding positions include 499 to 507 (LGGGGFGSV) and lysine 521. Serine 527 carries the post-translational modification Phosphoserine. Residues 582-600 (VEEKIVLGWKLRFQIALGT) form a caM-binding region. The active-site Proton acceptor is aspartate 619. The residue at position 653 (threonine 653) is a Phosphothreonine. Residues 796-828 (ESSSSSSHNSSQNHKHSSSSSSSKKMTNDNSSA) are disordered. The segment covering 797–828 (SSSSSSHNSSQNHKHSSSSSSSKKMTNDNSSA) has biased composition (low complexity). Serine 815 bears the Phosphoserine mark.

This sequence belongs to the protein kinase superfamily. Ser/Thr protein kinase family.

The protein localises to the cell membrane. The enzyme catalyses L-seryl-[protein] + ATP = O-phospho-L-seryl-[protein] + ADP + H(+). The catalysed reaction is L-threonyl-[protein] + ATP = O-phospho-L-threonyl-[protein] + ADP + H(+). The chain is G-type lectin S-receptor-like serine/threonine-protein kinase At2g19130 from Arabidopsis thaliana (Mouse-ear cress).